A 406-amino-acid chain; its full sequence is Probable endo-xylogalacturonan hydrolase A (406 aa).

A signal peptide spans 1-18; it reads MLYPRNLALFSLLSLSSA. PbH1 repeat units lie at residues 183–213, 214–235, 237–257, and 299–320; these read TQHV…DIGA, STHV…AFKP, SNYV…SVGS, and VKNV…QIES. The Proton donor role is filled by D228. Residue H251 is part of the active site. N301 carries N-linked (GlcNAc...) asparagine glycosylation.

The protein belongs to the glycosyl hydrolase 28 family.

It is found in the secreted. Its function is as follows. Pectinolytic enzyme involved in the degradation of xylogalacturonan (xga), a galacturonan backbone heavily substituted with xylose, and which is one important component of the hairy regions of pectin. Activity requires a galacturonic acid backbone substituted with xylose. This Aspergillus fumigatus (strain CBS 144.89 / FGSC A1163 / CEA10) (Neosartorya fumigata) protein is Probable endo-xylogalacturonan hydrolase A (xghA).